The primary structure comprises 52 residues: MVEVEKKKITLSIPVETNGKLEELAQKYGMTKSGLVNFLVNQVAEAGTIYRQ.

A DNA-binding region (H-T-H motif) is located at residues 20-40; it reads KLEELAQKYGMTKSGLVNFLV.

The protein belongs to the transcriptional regulatory CopG/NikR family. In terms of assembly, homodimer.

In terms of biological role, regulates the plasmid copy number. RepA binds to the repAB promoter thus controlling the synthesis of the plasmid replication initiator protein RepB. This Lactiplantibacillus plantarum (Lactobacillus plantarum) protein is Protein RepA (repA).